The sequence spans 231 residues: MKRAVVVFSGGQDSTTCLIQALSQYDEVHCVTFDYGQRHRAEIDVARKLAMQLGARAHKVIDAGLLNALAVSSLTRDNITFPGYEDSAGGLPSTFVPGRNILFLTLAAIYAYQVEASAVITGVCETDFSGYPDCRDNFIKALNAAVNLGMARELSFVTPLMWLDKAETWALADYYHQLDRVRHDTLTCYNGIKGDGCGQCAACHLRTHGLAAYRAQPQAVMASLKAKTGLH.

8-18 (FSGGQDSTTCL) is an ATP binding site. The Zn(2+) site is built by Cys-188, Cys-197, Cys-200, and Cys-203.

It belongs to the QueC family. It depends on Zn(2+) as a cofactor.

It catalyses the reaction 7-carboxy-7-deazaguanine + NH4(+) + ATP = 7-cyano-7-deazaguanine + ADP + phosphate + H2O + H(+). The protein operates within purine metabolism; 7-cyano-7-deazaguanine biosynthesis. Its function is as follows. Catalyzes the ATP-dependent conversion of 7-carboxy-7-deazaguanine (CDG) to 7-cyano-7-deazaguanine (preQ(0)). The sequence is that of 7-cyano-7-deazaguanine synthase from Sodalis glossinidius (strain morsitans).